A 143-amino-acid chain; its full sequence is UPF0306 protein plu4501 (143 aa).

Belongs to the UPF0306 family.

This is UPF0306 protein plu4501 from Photorhabdus laumondii subsp. laumondii (strain DSM 15139 / CIP 105565 / TT01) (Photorhabdus luminescens subsp. laumondii).